The primary structure comprises 270 residues: SAGA-associated factor 29 homolog A (270 aa).

Serine 2 carries the N-acetylserine modification. The tract at residues 85–113 is disordered; that stretch reads LPSGPTGQQRRKLEGNEQKRKRMKVDTDV. A compositionally biased stretch (basic and acidic residues) spans 95 to 113; the sequence is RKLEGNEQKRKRMKVDTDV. Residues 125–270 form the SGF29 C-terminal domain; it reads EAYASLKGEQ…VVALPEGHRQ (146 aa). Histone H3K4me3 N-terminus binding regions lie at residues 168 to 170 and 217 to 220; these read DEE and GTTA. The tract at residues 242–245 is histone H3K4me3 binding; that stretch reads FDDD.

Belongs to the SGF29 family. Expressed in roots, rosette leaves, cauline leaves, stems and flowers.

It localises to the nucleus. In terms of biological role, chromatin reader component of the transcription regulatory histone acetylation (HAT) complex SAGA. Involved in salt stress tolerance. Enhances the effect of ADA2B in the positive regulation of salt-induced gene expression. This is SAGA-associated factor 29 homolog A from Arabidopsis thaliana (Mouse-ear cress).